Consider the following 190-residue polypeptide: R46 site-specific recombinase (190 aa).

In terms of domain architecture, Resolvase/invertase-type recombinase catalytic spans 2 to 137 (RLFGYARVST…EGRQEAKLKG (136 aa)). Ser10 functions as the O-(5'-phospho-DNA)-serine intermediate in the catalytic mechanism. The H-T-H motif DNA-binding region spans 161 to 180 (ATDIARRLSIARSTVYKILE).

It belongs to the site-specific recombinase resolvase family.

Its function is as follows. Site-specific recombination protein. In Escherichia coli, this protein is R46 site-specific recombinase (tnpR).